The following is a 624-amino-acid chain: Glutaminase 2 (624 aa).

The interval 1-20 (MDTQPIRLPSVAGATRSAGY) is disordered. Residues 43–325 (GELADYIPEL…LSARFDLHML (283 aa)) are glutaminase. Positions 85, 134, 178, 185, 209, 261, and 279 each coordinate substrate. One can recognise an STAS domain in the interval 355-466 (QQILDERHSD…ALLDDAIEWA (112 aa)). Position 491 to 608 (491 to 608 (LLAELDTDEI…IMRNLAAILA (118 aa))) interacts with a nucleoside 3',5'-cyclic phosphate.

The protein belongs to the glutaminase family. In terms of assembly, homotetramer.

It catalyses the reaction L-glutamine + H2O = L-glutamate + NH4(+). The polypeptide is Glutaminase 2 (glsA2) (Bradyrhizobium diazoefficiens (strain JCM 10833 / BCRC 13528 / IAM 13628 / NBRC 14792 / USDA 110)).